A 538-amino-acid chain; its full sequence is Chaperonin GroEL (538 aa).

ATP-binding positions include 29-32 (TLGP), 86-90 (DGTTT), glycine 413, 477-479 (NAA), and aspartate 493.

The protein belongs to the chaperonin (HSP60) family. As to quaternary structure, forms a cylinder of 14 subunits composed of two heptameric rings stacked back-to-back. Interacts with the co-chaperonin GroES.

It localises to the cytoplasm. The enzyme catalyses ATP + H2O + a folded polypeptide = ADP + phosphate + an unfolded polypeptide.. Functionally, together with its co-chaperonin GroES, plays an essential role in assisting protein folding. The GroEL-GroES system forms a nano-cage that allows encapsulation of the non-native substrate proteins and provides a physical environment optimized to promote and accelerate protein folding. The sequence is that of Chaperonin GroEL from Scardovia inopinata (Bifidobacterium inopinatum).